The primary structure comprises 429 residues: Probable exoglucanase GH6D (429 aa).

Positions 1 to 17 (MRAVYAILAGLLATGSA) are cleaved as a signal peptide. Substrate is bound by residues W75 and S77. Catalysis depends on proton donor residues D115 and D162. N206 and W209 together coordinate substrate. N-linked (GlcNAc...) asparagine glycosylation is present at N237. Positions 240, 300, 328, and 332 each coordinate substrate. A disordered region spans residues 240-261 (NYNPYSTNNPPPYTAGSPSADE). The segment at 362 to 390 (PEIRADGGGGGSPAPGPSSTAVAPSPSAT) is disordered. Over residues 378-390 (PSSTAVAPSPSAT) the composition is skewed to low complexity. The region spanning 394 to 429 (NCAARWAQCGGQGWTGPTCCAQGTCQASNQWYSQCL) is the CBM1 domain.

The protein belongs to the glycosyl hydrolase 6 (cellulase B) family.

It is found in the secreted. Functionally, probable exoglucanase that may play an important function in biomass degradation by catalyzing the hydrolysis of cellulose. This chain is Probable exoglucanase GH6D, found in Podospora anserina (strain S / ATCC MYA-4624 / DSM 980 / FGSC 10383) (Pleurage anserina).